The sequence spans 203 residues: Probable chemoreceptor glutamine deamidase CheD (203 aa).

Belongs to the CheD family.

The catalysed reaction is L-glutaminyl-[protein] + H2O = L-glutamyl-[protein] + NH4(+). Its function is as follows. Probably deamidates glutamine residues to glutamate on methyl-accepting chemotaxis receptors (MCPs), playing an important role in chemotaxis. This Methylobacillus flagellatus (strain ATCC 51484 / DSM 6875 / VKM B-1610 / KT) protein is Probable chemoreceptor glutamine deamidase CheD.